Reading from the N-terminus, the 384-residue chain is Lipid-A-disaccharide synthase (384 aa).

It belongs to the LpxB family.

The enzyme catalyses a lipid X + a UDP-2-N,3-O-bis[(3R)-3-hydroxyacyl]-alpha-D-glucosamine = a lipid A disaccharide + UDP + H(+). It participates in bacterial outer membrane biogenesis; LPS lipid A biosynthesis. Functionally, condensation of UDP-2,3-diacylglucosamine and 2,3-diacylglucosamine-1-phosphate to form lipid A disaccharide, a precursor of lipid A, a phosphorylated glycolipid that anchors the lipopolysaccharide to the outer membrane of the cell. The polypeptide is Lipid-A-disaccharide synthase (Cellvibrio japonicus (strain Ueda107) (Pseudomonas fluorescens subsp. cellulosa)).